We begin with the raw amino-acid sequence, 307 residues long: MLKGRNLLDPMDFSLEELEEVFKLADEIIEEPEKFLHVCDGKILATLFYEPSTRTRFSFEAAMLRLGGQVIGFSEPNSSSVAKGESVADTIRTVGCYADIAAMRHPKEGAPAIAAMYSEIPVINAGDGSHQHPTQTLTDLLTIRSLKGDLSNLTIGCCGDLKFGRTVHSLVKALSRYKNNKFVFMSPEELKIPDYIRKEILEKNNIEYKEVSKMEDAMAELDILYMTRVQRERFFNEDDYVRLKDSYILDGEKMRYAKKDMMVLHPLPRVNEIAYEIDQDPRGCYFKQAKYGMYVRMALIAKLLGVR.

Carbamoyl phosphate is bound by residues arginine 54 and threonine 55. Lysine 83 is an L-aspartate binding site. Arginine 104, histidine 132, and glutamine 135 together coordinate carbamoyl phosphate. 2 residues coordinate L-aspartate: arginine 165 and arginine 228. The carbamoyl phosphate site is built by leucine 267 and proline 268.

It belongs to the aspartate/ornithine carbamoyltransferase superfamily. ATCase family. Heterododecamer (2C3:3R2) of six catalytic PyrB chains organized as two trimers (C3), and six regulatory PyrI chains organized as three dimers (R2).

It carries out the reaction carbamoyl phosphate + L-aspartate = N-carbamoyl-L-aspartate + phosphate + H(+). It functions in the pathway pyrimidine metabolism; UMP biosynthesis via de novo pathway; (S)-dihydroorotate from bicarbonate: step 2/3. In terms of biological role, catalyzes the condensation of carbamoyl phosphate and aspartate to form carbamoyl aspartate and inorganic phosphate, the committed step in the de novo pyrimidine nucleotide biosynthesis pathway. In Clostridium botulinum (strain Okra / Type B1), this protein is Aspartate carbamoyltransferase catalytic subunit.